The following is a 113-amino-acid chain: Urotensin-2B (113 aa).

An N-terminal signal peptide occupies residues 1–27 (MKVFSTSLWCGLLTLLSVMNLFKSVRG). Residues 28–103 (RPHLSSGHEL…LDNLSSSHTK (76 aa)) constitute a propeptide that is removed on maturation. Cys-107 and Cys-112 form a disulfide bridge.

Belongs to the urotensin-2 family.

It is found in the secreted. Potent vasoconstrictor. This is Urotensin-2B (Uts2b) from Mus musculus (Mouse).